The following is a 175-amino-acid chain: Protein FAM89A (175 aa).

The interval 141 to 175 (FQEQGSLQDGQHHGSPRDQSPLTHLSSSDWILESI) is disordered. The segment covering 157–169 (RDQSPLTHLSSSD) has biased composition (polar residues).

The protein belongs to the FAM89 family.

The chain is Protein FAM89A (Fam89a) from Mus musculus (Mouse).